The sequence spans 60 residues: Large ribosomal subunit protein bL32 (60 aa).

Belongs to the bacterial ribosomal protein bL32 family.

This Thermotoga maritima (strain ATCC 43589 / DSM 3109 / JCM 10099 / NBRC 100826 / MSB8) protein is Large ribosomal subunit protein bL32 (rpmF).